The primary structure comprises 528 residues: Cytochrome b5 reductase 4 (528 aa).

Residue methionine 1 is modified to N-acetylmethionine. The tract at residues methionine 1–lysine 29 is disordered. The span at glycine 13–serine 24 shows a compositional bias: low complexity. Residues leucine 54–alanine 130 enclose the Cytochrome b5 heme-binding domain. Residues histidine 89 and histidine 112 each contribute to the heme site. Positions leucine 172–glycine 263 constitute a CS domain. The 113-residue stretch at leucine 280–serine 392 folds into the FAD-binding FR-type domain. FAD contacts are provided by residues aspartate 372 to glycine 387 and aspartate 399 to leucine 431.

It belongs to the flavoprotein pyridine nucleotide cytochrome reductase family. Requires FAD as cofactor. Ubiquitously expressed. Isoform 2 is expressed in testis, brain, skeletal muscle and in the male germline.

It localises to the endoplasmic reticulum. It carries out the reaction 2 Fe(III)-[cytochrome b5] + NADH = 2 Fe(II)-[cytochrome b5] + NAD(+) + H(+). NADH-cytochrome b5 reductase involved in endoplasmic reticulum stress response pathway. Plays a critical role in protecting pancreatic beta-cells against oxidant stress, possibly by protecting the cell from excess buildup of reactive oxygen species (ROS). In Mus musculus (Mouse), this protein is Cytochrome b5 reductase 4 (Cyb5r4).